A 252-amino-acid chain; its full sequence is MSVPPGSIIVSDWHRCPDSREFFSKILHKKRRRKFGLLEAPMMPPQMNVDLVRYKVFLSGKTGVGKSALAARLAGLDLPKMHYETTGIETTVVFWPVRLKESGRVLFFRFELWDCGESAMRRFDHMLLSCKEKVDAILFLFSFTDRGSFDDLTNQISRITEPSDRVVKLVVGTKFDLFMHTDVTESDVTHFQEVWGLPVFRVGGDVSAGLGEVAPLLNALAENLWHQDCMAASSVSISPQAALRETSSEIIV.

The interval 46 to 252 (QMNVDLVRYK…LRETSSEIIV (207 aa)) is small GTPase-like. GTP is bound by residues 62–67 (TGVGKS) and 173–176 (TKFD).

The protein belongs to the small GTPase superfamily. Rab family.

The protein localises to the cytoplasm. The protein resides in the cytoskeleton. It is found in the cilium basal body. Its function is as follows. Potential effector of the planar cell polarity signaling pathway. Plays a role in targeted membrane trafficking most probably at the level of vesicle fusion with membranes. Involved in cilium biogenesis by regulating the transport of cargo proteins to the basal body and to the apical tips of cilia. More generally involved in exocytosis in secretory cells. The protein is Ciliogenesis and planar polarity effector 2 (cplane2) of Danio rerio (Zebrafish).